Consider the following 216-residue polypeptide: 3-isopropylmalate dehydratase small subunit (216 aa).

This sequence belongs to the LeuD family. LeuD type 1 subfamily. As to quaternary structure, heterodimer of LeuC and LeuD.

The enzyme catalyses (2R,3S)-3-isopropylmalate = (2S)-2-isopropylmalate. It functions in the pathway amino-acid biosynthesis; L-leucine biosynthesis; L-leucine from 3-methyl-2-oxobutanoate: step 2/4. Functionally, catalyzes the isomerization between 2-isopropylmalate and 3-isopropylmalate, via the formation of 2-isopropylmaleate. The sequence is that of 3-isopropylmalate dehydratase small subunit from Bordetella avium (strain 197N).